The primary structure comprises 156 residues: Bacterial microcompartment shell protein PduK (156 aa).

The region spanning Ser4–Val89 is the BMC domain. The segment at Gly81 to Ala119 is disordered. Basic and acidic residues predominate over residues Pro106–Ala116.

The protein belongs to the bacterial microcompartments protein family. In terms of assembly, interacts with shell protein PduA and assembly protein PduM. Interacts with PduP, probably with its first 18 residues. The cofactor is Fe cation.

It is found in the bacterial microcompartment. It functions in the pathway polyol metabolism; 1,2-propanediol degradation. Functionally, a minor shell protein of the bacterial microcompartment (BMC) dedicated to 1,2-propanediol (1,2-PD) degradation. Expression of a cosmid containing the full 21-gene pdu operon in E.coli allows E.coli to grow on 1,2-propanediol (1,2-PD) with the appearance of bacterial microcompartments (BMC) in its cytoplasm. Overexpression of this protein leads to the appearance of a single large aggregate complex in the cytoplasm. In terms of biological role, the 1,2-PD-specific bacterial microcompartment (BMC) concentrates low levels of 1,2-PD catabolic enzymes, concentrates volatile reaction intermediates thus enhancing pathway flux and keeps the level of toxic, mutagenic propionaldehyde low. The polypeptide is Bacterial microcompartment shell protein PduK (Citrobacter freundii).